We begin with the raw amino-acid sequence, 449 residues long: tRNA-2-methylthio-N(6)-dimethylallyladenosine synthase (449 aa).

One can recognise an MTTase N-terminal domain in the interval 3–124 (KMLYIKTYGC…LPTMLEKLDS (122 aa)). The [4Fe-4S] cluster site is built by cysteine 12, cysteine 48, cysteine 87, cysteine 163, cysteine 167, and cysteine 170. Residues 149 to 380 (KSPTVSGLVS…QAQLMQQQLE (232 aa)) enclose the Radical SAM core domain. One can recognise a TRAM domain in the interval 383 to 447 (QKLIGKVVPV…ASSLFGEVYA (65 aa)).

This sequence belongs to the methylthiotransferase family. MiaB subfamily. In terms of assembly, monomer. [4Fe-4S] cluster is required as a cofactor.

It localises to the cytoplasm. It catalyses the reaction N(6)-dimethylallyladenosine(37) in tRNA + (sulfur carrier)-SH + AH2 + 2 S-adenosyl-L-methionine = 2-methylsulfanyl-N(6)-dimethylallyladenosine(37) in tRNA + (sulfur carrier)-H + 5'-deoxyadenosine + L-methionine + A + S-adenosyl-L-homocysteine + 2 H(+). Catalyzes the methylthiolation of N6-(dimethylallyl)adenosine (i(6)A), leading to the formation of 2-methylthio-N6-(dimethylallyl)adenosine (ms(2)i(6)A) at position 37 in tRNAs that read codons beginning with uridine. The sequence is that of tRNA-2-methylthio-N(6)-dimethylallyladenosine synthase from Orientia tsutsugamushi (strain Ikeda) (Rickettsia tsutsugamushi).